The chain runs to 159 residues: Small ribosomal subunit protein uS19 (159 aa).

Belongs to the universal ribosomal protein uS19 family.

In terms of biological role, protein S19 forms a complex with S13 that binds strongly to the 16S ribosomal RNA. The sequence is that of Small ribosomal subunit protein uS19 from Pyrobaculum arsenaticum (strain DSM 13514 / JCM 11321 / PZ6).